Here is a 101-residue protein sequence, read N- to C-terminus: MAKTSAVEKNKRRRKLVANHAAKRAVLKAIIMNQSLPIEERFKATLKLAELPRDGSKTRIRNRCEVTGRPRAYYRKLRMSRIALRELGNLGKVPGVVKSSW.

Belongs to the universal ribosomal protein uS14 family. Part of the 30S ribosomal subunit. Contacts proteins S3 and S10.

Functionally, binds 16S rRNA, required for the assembly of 30S particles and may also be responsible for determining the conformation of the 16S rRNA at the A site. This Rhizobium meliloti (strain 1021) (Ensifer meliloti) protein is Small ribosomal subunit protein uS14.